The primary structure comprises 373 residues: Forkhead box protein F1 (373 aa).

Residues 1 to 51 (MTAEIQQPPSQPPAQSSPMSAATDKHGGQPSVMESANCATKTKKTNAGIRR) are disordered. Residues 13 to 22 (PAQSSPMSAA) are compositionally biased toward low complexity. Positions 54-148 (KPPYSYIALI…EEGSFRRRPR (95 aa)) form a DNA-binding region, fork-head. Disordered regions lie at residues 236 to 255 (GSSGGDYSHHDSGSPLLGGG) and 283 to 306 (QPLSPCNSAANPLSSSLSSHSLDQ). Over residues 286–306 (SPCNSAANPLSSSLSSHSLDQ) the composition is skewed to low complexity.

Its subcellular location is the nucleus. Its function is as follows. Probable transcription factor. Required for smooth muscle (visceral mesoderm) differentiation during gut development. Also required for normal proliferation of the lateral plate mesoderm. Acts as a downstream mediator of bmp4-signaling. The chain is Forkhead box protein F1 from Xenopus tropicalis (Western clawed frog).